The following is a 68-amino-acid chain: U19-ctenitoxin-Pn1a (68 aa).

Glutamine 1 is subject to Pyrrolidone carboxylic acid. 5 cysteine pairs are disulfide-bonded: cysteine 8/cysteine 19, cysteine 13/cysteine 28, cysteine 18/cysteine 51, cysteine 38/cysteine 59, and cysteine 53/cysteine 65.

In terms of tissue distribution, expressed by the venom gland.

It is found in the secreted. In terms of biological role, non-toxic to mice and insects. The protein is U19-ctenitoxin-Pn1a of Phoneutria nigriventer (Brazilian armed spider).